A 161-amino-acid chain; its full sequence is Protein UXT homolog (161 aa).

The protein belongs to the UXT family.

This Dictyostelium discoideum (Social amoeba) protein is Protein UXT homolog.